The chain runs to 275 residues: Myoblast determination protein 1 homolog 2 (275 aa).

In terms of domain architecture, bHLH spans 84–135 (DRRKAATMRERRRLGKVNDAFENLKRCTSNNPNQRLPKVEILRNAISYIESL). Over residues 232-265 (SGQEGSEGSPCSPQEGSILSRNGGTVPSPTNCPQ) the composition is skewed to polar residues. The segment at 232–275 (SGQEGSEGSPCSPQEGSILSRNGGTVPSPTNCPQPSHDPIYQVL) is disordered.

As to quaternary structure, efficient DNA binding requires dimerization with another bHLH protein.

It is found in the nucleus. Its function is as follows. May act as a transcriptional activator that promotes transcription of muscle-specific target genes and plays a role in muscle differentiation. In Oncorhynchus mykiss (Rainbow trout), this protein is Myoblast determination protein 1 homolog 2 (myod2).